A 210-amino-acid polypeptide reads, in one-letter code: Pyridoxine/pyridoxamine 5'-phosphate oxidase (210 aa).

Substrate contacts are provided by residues 7–10 and Lys65; that span reads REDY. Residues 60-65, 75-76, Arg81, Lys82, and Gln104 contribute to the FMN site; these read RMVLLK and FT. The substrate site is built by Tyr122, Arg126, and Ser130. FMN is bound by residues 139-140 and Trp183; that span reads QS. 189–191 is a substrate binding site; sequence RLH. Arg193 serves as a coordination point for FMN.

The protein belongs to the pyridoxamine 5'-phosphate oxidase family. Homodimer. It depends on FMN as a cofactor.

It carries out the reaction pyridoxamine 5'-phosphate + O2 + H2O = pyridoxal 5'-phosphate + H2O2 + NH4(+). The enzyme catalyses pyridoxine 5'-phosphate + O2 = pyridoxal 5'-phosphate + H2O2. It functions in the pathway cofactor metabolism; pyridoxal 5'-phosphate salvage; pyridoxal 5'-phosphate from pyridoxamine 5'-phosphate: step 1/1. The protein operates within cofactor metabolism; pyridoxal 5'-phosphate salvage; pyridoxal 5'-phosphate from pyridoxine 5'-phosphate: step 1/1. Catalyzes the oxidation of either pyridoxine 5'-phosphate (PNP) or pyridoxamine 5'-phosphate (PMP) into pyridoxal 5'-phosphate (PLP). This chain is Pyridoxine/pyridoxamine 5'-phosphate oxidase, found in Neisseria meningitidis serogroup B (strain ATCC BAA-335 / MC58).